The chain runs to 215 residues: A-type ATP synthase subunit E (215 aa).

The protein belongs to the V-ATPase E subunit family. Has multiple subunits with at least A(3), B(3), C, D, E, F, H, I and proteolipid K(x).

The protein resides in the cell membrane. Component of the A-type ATP synthase that produces ATP from ADP in the presence of a proton gradient across the membrane. This Thermofilum pendens (strain DSM 2475 / Hrk 5) protein is A-type ATP synthase subunit E.